An 808-amino-acid polypeptide reads, in one-letter code: Disks large-associated protein 5 (808 aa).

2 positions are modified to phosphoserine: S66 and S70. Residues Q88–V119 adopt a coiled-coil conformation. Residues Q134–P282 are disordered. 2 stretches are compositionally biased toward basic and acidic residues: residues R135–F145 and Q180–V193. Residue S201 is modified to Phosphoserine. Composition is skewed to basic and acidic residues over residues T232–R241 and K249–S278. Phosphoserine is present on S328. Phosphothreonine occurs at positions 337 and 386. The tract at residues H377–D413 is disordered. Over residues K382–A392 the composition is skewed to polar residues. Residue S598 is modified to Phosphoserine. S607 carries the post-translational modification Phosphoserine; by AURKA. A Phosphoserine modification is found at S612. T617 bears the Phosphothreonine mark. S620 carries the post-translational modification Phosphoserine. Positions R629–V654 are disordered. A compositionally biased stretch (basic and acidic residues) spans K642–V654. Residue T728 is modified to Phosphothreonine. A disordered region spans residues S735 to S757. A Phosphoserine modification is found at S743. Residue S797 is modified to Phosphoserine; by AURKA. S806 carries the phosphoserine modification.

This sequence belongs to the SAPAP family. Interacts with CDC2. Interacts with the C-terminal proline-rich region of FBXO7. Recruited by FBXO7 to a SCF (SKP1-CUL1-F-box) protein complex in a CDC2/Cyclin B-phosphorylation dependent manner. Interacts with CDH1. In terms of processing, ubiquitinated, leading to its degradation. Decreased phosphorylation levels are associated with the differentiation of intestinal epithelial cells. In terms of tissue distribution, expressed at low levels in normal resting liver. Up-regulated in regenerating liver after partial hepatectomy.

Its subcellular location is the nucleus. It localises to the cytoplasm. The protein resides in the cytoskeleton. The protein localises to the spindle. In terms of biological role, potential cell cycle regulator that may play a role in carcinogenesis of cancer cells. Mitotic phosphoprotein regulated by the ubiquitin-proteasome pathway. Key regulator of adherens junction integrity and differentiation that may be involved in CDH1-mediated adhesion and signaling in epithelial cells. This is Disks large-associated protein 5 (Dlgap5) from Mus musculus (Mouse).